We begin with the raw amino-acid sequence, 344 residues long: Small ribosomal subunit protein uS3 (344 aa).

The KH type-2 domain occupies 38-106 (LKAALRERLK…EVFIDIQEVH (69 aa)). The segment at 217-344 (PEPEPRREQR…QKPEGSGENQ (128 aa)) is disordered. Composition is skewed to basic and acidic residues over residues 219-259 (PEPR…RGDR) and 335-344 (QKPEGSGENQ).

This sequence belongs to the universal ribosomal protein uS3 family. As to quaternary structure, part of the 30S ribosomal subunit. Forms a tight complex with proteins S10 and S14.

In terms of biological role, binds the lower part of the 30S subunit head. Binds mRNA in the 70S ribosome, positioning it for translation. This Solibacter usitatus (strain Ellin6076) protein is Small ribosomal subunit protein uS3.